The primary structure comprises 292 residues: Pyruvate formate-lyase 2-activating enzyme (292 aa).

In terms of domain architecture, Radical SAM core spans 33-287 (NDGEGIRTVV…REMAERAGLQ (255 aa)). Residues Cys-47, Cys-51, and Cys-54 each coordinate [4Fe-4S] cluster. 53–55 (WCA) contributes to the S-adenosyl-L-methionine binding site. The region spanning 62 to 96 (GKIQTVRREAKCLHCAKCLRDADECPSGAFERIGR) is the 4Fe-4S ferredoxin-type domain. S-adenosyl-L-methionine contacts are provided by residues Gly-126, 175 to 177 (DLK), and His-247.

Belongs to the organic radical-activating enzymes family. The cofactor is [4Fe-4S] cluster.

Its subcellular location is the cytoplasm. It carries out the reaction glycyl-[formate C-acetyltransferase] + reduced [flavodoxin] + S-adenosyl-L-methionine = glycin-2-yl radical-[formate C-acetyltransferase] + semiquinone [flavodoxin] + 5'-deoxyadenosine + L-methionine + H(+). Its function is as follows. Activation of pyruvate formate-lyase 2 under anaerobic conditions by generation of an organic free radical, using S-adenosylmethionine and reduced flavodoxin as cosubstrates to produce 5'-deoxy-adenosine. This chain is Pyruvate formate-lyase 2-activating enzyme (pflC), found in Escherichia coli (strain K12).